Consider the following 118-residue polypeptide: Large ribosomal subunit protein bL20 (118 aa).

Belongs to the bacterial ribosomal protein bL20 family.

In terms of biological role, binds directly to 23S ribosomal RNA and is necessary for the in vitro assembly process of the 50S ribosomal subunit. It is not involved in the protein synthesizing functions of that subunit. In Thermotoga petrophila (strain ATCC BAA-488 / DSM 13995 / JCM 10881 / RKU-1), this protein is Large ribosomal subunit protein bL20.